The chain runs to 684 residues: Sorbicillinoid biosynthetic cluster transcription factor 2 (684 aa).

The disordered stretch occupies residues 114–151; that stretch reads ISSAPSLETPPESVAASPPTVDSIPVSHHVNEDPEAEP.

The protein localises to the nucleus. Functionally, transcription factor that acts in concert with sorR1 which is a transcriptional activator of the gene cluster that mediates the biosynthesis of sorbicillinoids, a diverse group of yellow secondary metabolites that restrict growth of competing pathogenic fungi but not of bacteria. This chain is Sorbicillinoid biosynthetic cluster transcription factor 2, found in Penicillium rubens (strain ATCC 28089 / DSM 1075 / NRRL 1951 / Wisconsin 54-1255) (Penicillium chrysogenum).